The chain runs to 449 residues: UDP-N-acetylmuramate--L-alanine ligase (449 aa).

An ATP-binding site is contributed by 121 to 127; that stretch reads GAHGKSS.

The protein belongs to the MurCDEF family.

The protein resides in the cytoplasm. The catalysed reaction is UDP-N-acetyl-alpha-D-muramate + L-alanine + ATP = UDP-N-acetyl-alpha-D-muramoyl-L-alanine + ADP + phosphate + H(+). It functions in the pathway cell wall biogenesis; peptidoglycan biosynthesis. Cell wall formation. In Helicobacter pylori (strain HPAG1), this protein is UDP-N-acetylmuramate--L-alanine ligase.